The following is a 260-amino-acid chain: Hemin import ATP-binding protein HmuV (260 aa).

One can recognise an ABC transporter domain in the interval 3-239; the sequence is LHAQQISLSI…QRLSEVYGCD (237 aa). 35–42 lines the ATP pocket; sequence GPNGSGKS.

It belongs to the ABC transporter superfamily. Heme (hemin) importer (TC 3.A.1.14.5) family. The complex is composed of two ATP-binding proteins (HmuV), two transmembrane proteins (HmuU) and a solute-binding protein (HmuT).

It is found in the cell inner membrane. Functionally, part of the ABC transporter complex HmuTUV involved in hemin import. Responsible for energy coupling to the transport system. In Ruegeria sp. (strain TM1040) (Silicibacter sp.), this protein is Hemin import ATP-binding protein HmuV.